We begin with the raw amino-acid sequence, 320 residues long: ATPase H(+)-transporting accessory protein 2 (320 aa).

An N-terminal signal peptide occupies residues 1-17; sequence MLRVFVIFSLFIAAINA. At 18–277 the chain is on the lumenal side; it reads SGEFTVLNRP…YGSDYPVIFN (260 aa). The helical transmembrane segment at 278–298 threads the bilayer; the sequence is IILWFMVVFGLSLLAICYAIA. Residues 299–320 lie on the Cytoplasmic side of the membrane; it reads AMDPGRDSIIYRMTSTRIKKDN. Residues 317-320 carry the Mediates retrograde transport to the ER motif; it reads KKDN.

Interacts with fz and fz2. Interacts (via N-terminus) with stan. As an accessory component of the multisubunit proton-transporting vacuolar (V)-ATPase protein pump, might interacts with VhaAC45. Proteolytically cleaved by a furin-like convertase in the trans-Golgi network to generate N- and C-terminal fragments. Cleavage is reduced in the fat body.

Its subcellular location is the cell membrane. It localises to the endoplasmic reticulum membrane. The protein resides in the vesicle. The protein localises to the apical cell membrane. It is found in the golgi apparatus membrane. Its subcellular location is the secreted. In terms of biological role, multifunctional protein which functions as a transmembrane receptor in the planar cell polarity (PCP) and is involved in the assembly of the proton-transporting vacuolar (V)-ATPase protein pump. As transmembrane receptor mediates fz/PCP signaling through interaction with fz and stabilizes asymmetric PCP domains through its interaction with stan. Also mediates Wnt/beta-cat signaling through interaction with fz/fz2. Probably by controlling the assembly of the V-ATPase pump and thus the acidification of the endo-lysosomal system, plays a role in many neuronal processes including synapse morphology and synaptic transmission. Its function is as follows. Stabilizes asymmetric Planar Cell Polarity (PCP) domains through its interaction with stan. In Drosophila melanogaster (Fruit fly), this protein is ATPase H(+)-transporting accessory protein 2.